Consider the following 457-residue polypeptide: L-lysine-epsilon aminotransferase (457 aa).

Pyridoxal 5'-phosphate-binding residues include G131 and A132. The 2-oxoglutarate site is built by R172 and Q278. An L-lysine-binding site is contributed by R172. Residue Q278 participates in pyridoxal 5'-phosphate binding. N6-(pyridoxal phosphate)lysine is present on K304. R427 provides a ligand contact to 2-oxoglutarate.

Belongs to the class-III pyridoxal-phosphate-dependent aminotransferase family. In terms of assembly, monomer. The cofactor is pyridoxal 5'-phosphate.

The enzyme catalyses L-lysine + 2-oxoglutarate = (S)-2-amino-6-oxohexanoate + L-glutamate. The protein operates within antibiotic biosynthesis; cephamycin C biosynthesis. With respect to regulation, activity is induced in the presence of high concentrations of lysine, but not by L-alpha-aminoadipic acid. Not repressed by ammonium ions. Its function is as follows. Catalyzes the transfer of the terminal amino group of L-lysine to alpha-ketoglutarate to yield L-glutamate and 2-aminoadipate 6-semialdehyde ((S)-2-amino-6-oxohexanoate), which is spontaneously converted to the dehydrated form 1-piperideine 6-carboxylate. Shows a high specificity for L-lysine as substrate although L-ornithine can also be used, leading to the formation of an o-aminobenzaldehyde reactive compound. Only cis-oxaloacetate and pyruvate can replace alpha-ketoglutarate, but with very low efficiency. This is L-lysine-epsilon aminotransferase from Streptomyces clavuligerus.